We begin with the raw amino-acid sequence, 458 residues long: N-acetylgalactosamine kinase (458 aa).

4 residues coordinate alpha-D-galactose: Arg43, Glu49, His50, and Asp52. Residues Gly143, Ser145, and Ser146 each contribute to the ATP site. Residue Asp190 participates in alpha-D-galactose binding. Asp190 acts as the Proton acceptor in catalysis. ATP-binding residues include Asn233 and Lys234.

It belongs to the GHMP kinase family. GalK subfamily. Monomer.

The catalysed reaction is N-acetyl-alpha-D-galactosamine + ATP = N-acetyl-alpha-D-galactosamine 1-phosphate + ADP + H(+). Its function is as follows. Acts on GalNAc. Also acts as a galactokinase when galactose is present at high concentrations. The protein is N-acetylgalactosamine kinase (GALK2) of Pongo abelii (Sumatran orangutan).